A 246-amino-acid chain; its full sequence is Aliphatic sulfonates import ATP-binding protein SsuB 2 (246 aa).

The region spanning 4 to 218 (VTVRGLRRAF…RRDPRFEQAR (215 aa)) is the ABC transporter domain. Residue 36–43 (GRSGGGKT) coordinates ATP.

It belongs to the ABC transporter superfamily. Aliphatic sulfonates importer (TC 3.A.1.17.2) family. In terms of assembly, the complex is composed of two ATP-binding proteins (SsuB), two transmembrane proteins (SsuC) and a solute-binding protein (SsuA).

It is found in the cell membrane. The enzyme catalyses ATP + H2O + aliphatic sulfonate-[sulfonate-binding protein]Side 1 = ADP + phosphate + aliphatic sulfonateSide 2 + [sulfonate-binding protein]Side 1.. In terms of biological role, part of the ABC transporter complex SsuABC involved in aliphatic sulfonates import. Responsible for energy coupling to the transport system. In Frankia alni (strain DSM 45986 / CECT 9034 / ACN14a), this protein is Aliphatic sulfonates import ATP-binding protein SsuB 2.